We begin with the raw amino-acid sequence, 487 residues long: N-succinylglutamate 5-semialdehyde dehydrogenase (487 aa).

221 to 226 (GSSRTG) provides a ligand contact to NAD(+). Active-site residues include Glu-244 and Cys-278.

The protein belongs to the aldehyde dehydrogenase family. AstD subfamily.

The catalysed reaction is N-succinyl-L-glutamate 5-semialdehyde + NAD(+) + H2O = N-succinyl-L-glutamate + NADH + 2 H(+). It participates in amino-acid degradation; L-arginine degradation via AST pathway; L-glutamate and succinate from L-arginine: step 4/5. Functionally, catalyzes the NAD-dependent reduction of succinylglutamate semialdehyde into succinylglutamate. In Pseudomonas aeruginosa (strain ATCC 15692 / DSM 22644 / CIP 104116 / JCM 14847 / LMG 12228 / 1C / PRS 101 / PAO1), this protein is N-succinylglutamate 5-semialdehyde dehydrogenase (astD).